The following is a 382-amino-acid chain: Alpha-2B adrenergic receptor (382 aa).

A helical transmembrane segment spans residues 1-25 (AIAAVITFLILFTIFGNALVILAVL). Residues 26 to 36 (TSRSLRAPQNL) are Cytoplasmic-facing. Residues 37–62 (FLVSLAAADILVATLIIPFSLANELL) form a helical membrane-spanning segment. Topologically, residues 63–72 (GYWYFRHTWC) are extracellular. A disulfide bridge links Cys72 with Cys151. Residues 73-95 (EVYLALDVLFCTSSIVHLCAISL) traverse the membrane as a helical segment. The Cytoplasmic portion of the chain corresponds to 96-117 (DRYWSVSRALEYNSKRTPRRIK). Residues 118–140 (GIILTVWLIAAFISLPPLIYKGD) traverse the membrane as a helical segment. Topologically, residues 141–156 (KGKKPGGRPQCKLNEE) are extracellular. The chain crosses the membrane as a helical span at residues 157–180 (AWYILSSSIGSFFAPCLIMILVYL). Residues 181–346 (RIYLIAKRRN…MNREKRFTFV (166 aa)) are Cytoplasmic-facing. Residues 192–305 (QGPHGKQAPG…QGTPNFQPSQ (114 aa)) are disordered. Residues 271 to 284 (EEEEEEEEEEEEEC) are compositionally biased toward acidic residues. A compositionally biased stretch (polar residues) spans 291 to 305 (TSSSLQGTPNFQPSQ). A helical membrane pass occupies residues 347–370 (LAVVIGVFVLCWFPFFFSYSLGAI). Topologically, residues 371–379 (CPQHCKVPH) are extracellular. Residues 380-382 (GLF) form a helical membrane-spanning segment.

Belongs to the G-protein coupled receptor 1 family. Adrenergic receptor subfamily. ADRA2B sub-subfamily. In terms of assembly, interacts with RAB26. Interacts with PPP1R9B. Interacts with GGA1, GGA2 and GGA3.

Its subcellular location is the cell membrane. Functionally, alpha-2 adrenergic receptors mediate the catecholamine-induced inhibition of adenylate cyclase through the action of G proteins. This Didelphis virginiana (North American opossum) protein is Alpha-2B adrenergic receptor (ADRA2B).